The primary structure comprises 408 residues: 4-hydroxy-3-methylbut-2-en-1-yl diphosphate synthase (ferredoxin) (408 aa).

Polar residues predominate over residues 1-21; it reads MQTLPTPTTSSNTANQSTFDT. Residues 1 to 26 form a disordered region; that stretch reads MQTLPTPTTSSNTANQSTFDTTIKRR. Residues cysteine 317, cysteine 320, cysteine 351, and glutamate 358 each contribute to the [4Fe-4S] cluster site.

This sequence belongs to the IspG family. Requires [4Fe-4S] cluster as cofactor.

The catalysed reaction is (2E)-4-hydroxy-3-methylbut-2-enyl diphosphate + 2 oxidized [2Fe-2S]-[ferredoxin] + H2O = 2-C-methyl-D-erythritol 2,4-cyclic diphosphate + 2 reduced [2Fe-2S]-[ferredoxin] + H(+). It functions in the pathway isoprenoid biosynthesis; isopentenyl diphosphate biosynthesis via DXP pathway; isopentenyl diphosphate from 1-deoxy-D-xylulose 5-phosphate: step 5/6. Functionally, converts 2C-methyl-D-erythritol 2,4-cyclodiphosphate (ME-2,4cPP) into 1-hydroxy-2-methyl-2-(E)-butenyl 4-diphosphate. This is 4-hydroxy-3-methylbut-2-en-1-yl diphosphate synthase (ferredoxin) from Trichormus variabilis (strain ATCC 29413 / PCC 7937) (Anabaena variabilis).